The following is a 2411-amino-acid chain: Polyprotein P1234 (2411 aa).

The region spanning Glu-30–His-257 is the Alphavirus-like MT domain. The tract at residues Gly-242 to Thr-261 is nsP1 membrane-binding. S-palmitoyl cysteine; by host attachment occurs at residues Cys-415 and Cys-417. Positions Glu-688–Lys-840 constitute a (+)RNA virus helicase ATP-binding domain. Gly-719 to Ser-726 lines the a ribonucleoside 5'-triphosphate pocket. A (+)RNA virus helicase C-terminal domain is found at Ser-841–Gly-989. One can recognise a Peptidase C9 domain in the interval Asn-1002–Thr-1325. The tract at residues Thr-1003 to Thr-1022 is nucleolus localization signal. Cys-1011 (for cysteine protease nsP2 activity) is an active-site residue. A Nuclear export signal motif is present at residues Thr-1056 to Thr-1065. The For cysteine protease nsP2 activity role is filled by His-1081. The Nuclear localization signal motif lies at Pro-1180–Ile-1184. The Macro domain maps to Ala-1332–Thr-1491. Residues Asp-1341, Asn-1355, Gly-1363, Gly-1443, Ile-1444, and Tyr-1445 each contribute to the ADP-D-ribose site. The Zn(2+) site is built by Cys-1593, Cys-1595, Cys-1618, and Cys-1636. Positions Asp-1681–Lys-1720 are disordered. Short sequence motifs (FGDF; binding to host G3BP1) lie at residues Phe-1760–Phe-1763 and Phe-1778–Phe-1781. One can recognise a RdRp catalytic domain in the interval Asp-2165–Ala-2280.

In terms of assembly, interacts with non-structural protein 3. Interacts with RNA-directed RNA polymerase nsP4. Interacts with protease nsP2. interacts with itself. As to quaternary structure, interacts with mRNA-capping enzyme nsP1. Interacts with host DDX1. Interacts with host DDX3. Interacts (via C-terminus) with host G3BP1; this interaction inhibits the formation of host stress granules on viral mRNAs and the nsp3-G3BP1 complexes bind viral RNAs and probably orchestrate the assembly of viral replication complexes. Interacts (via C-terminus) with host G3BP2; this interaction inhibits the formation of host stress granules on viral mRNAs and the nsp3-G3BP2 complexes bind viral RNAs and probably orchestrate the assembly of viral replication complexes. Interacts with mRNA-capping enzyme nsP1. Interacts with protease nsP2. interacts with itself. In terms of assembly, interacts with RNA-directed RNA polymerase nsP4. Interacts with mRNA-capping enzyme nsP1. Interacts with KPNA1/karyopherin-alpha1; this interaction probably allows the active transport of protease nsP2 into the host nucleus. It depends on Mg(2+) as a cofactor. The cofactor is Mn(2+). Post-translationally, specific enzymatic cleavages in vivo yield mature proteins. The processing of the polyprotein is temporally regulated. In early stages (1.7 hpi), P1234 is first cleaved in trans through its nsP2 protease activity, releasing P123' and nsP4, which associate to form the early replication complex. At the same time, P1234 is also cut at the nsP1/nsP2 site early in infection but with lower efficiency. After replication of the viral minus-strand RNAs (4 hpi), the polyproteins are cut at the nsP1/nsP2 and nsP2/nsP3 sites very efficiently, preventing accumulation of P123' and P1234 and allowing the formation of the late replication complex. NsP3'/nsP4 site is not cleaved anymore and P34 is produced rather than nsP4. Specific enzymatic cleavages in vivo yield mature proteins. The processing of the polyprotein is temporally regulated. In early stages (1.7 hpi), P123 is cleaved at the nsP1/nsP2 site with low efficiency. After replication of the viral minus-strand RNAs (4 hpi), the polyproteins are cut at the nsP1/nsP2 and nsP2/nsP3 sites very efficiently, preventing accumulation of P123 and allowing the formation of the late replication complex. In terms of processing, specific enzymatic cleavages in vivo yield mature proteins. The processing of the polyprotein is temporally regulated. In early stages (1.7 hpi), P123' is cleaved at the nsP1/nsP2 site with low efficiency. After replication of the viral minus-strand RNAs (4 hpi), the polyproteins are cut at the nsP1/nsP2 and nsP2/nsP3 sites very efficiently, preventing accumulation of P123' and allowing the formation of the late replication complex. Post-translationally, palmitoylated by host palmitoyltransferases ZDHHC2 and ZDHHC19. Phosphorylated by host on serines and threonines. In terms of processing, ubiquitinated; targets the protein for rapid degradation via the ubiquitin system. Nsp4 is present in extremely low quantities due to low frequency of translation through the amber stop-codon and the degradation by the ubiquitin pathway.

The protein resides in the host cytoplasmic vesicle membrane. It is found in the host cell membrane. The protein localises to the host cell projection. Its subcellular location is the host filopodium. It localises to the host nucleus. The protein resides in the host cytoplasm. The enzyme catalyses GTP + S-adenosyl-L-methionine = N(7)-methyl-GTP + S-adenosyl-L-homocysteine. It catalyses the reaction N(7)-methyl-GTP + L-histidyl-[protein] = N(tele)-(N(7)-methylguanosine 5'-phospho)-L-histidyl-[protein] + diphosphate. The catalysed reaction is N(tele)-(N(7)-methylguanosine 5'-phospho)-L-histidyl-[protein] + a 5'-end diphospho-(purine-ribonucleoside) in mRNA + H(+) = a 5'-end (N(7)-methyl 5'-triphosphoguanosine)-(purine-ribonucleoside) in mRNA + L-histidyl-[protein]. It carries out the reaction a 5'-end triphospho-ribonucleoside in mRNA + H2O = a 5'-end diphospho-ribonucleoside in mRNA + phosphate + H(+). The enzyme catalyses a ribonucleoside 5'-triphosphate + H2O = a ribonucleoside 5'-diphosphate + phosphate + H(+). It catalyses the reaction ATP + H2O = ADP + phosphate + H(+). The catalysed reaction is RNA(n) + a ribonucleoside 5'-triphosphate = RNA(n+1) + diphosphate. It carries out the reaction RNA(n) + ATP = RNA(n)-3'-adenine ribonucleotide + diphosphate. The enzyme catalyses 4-O-(ADP-D-ribosyl)-L-aspartyl-[protein] + H2O = L-aspartyl-[protein] + ADP-D-ribose + H(+). It catalyses the reaction 5-O-(ADP-D-ribosyl)-L-glutamyl-[protein] + H2O = L-glutamyl-[protein] + ADP-D-ribose + H(+). The catalysed reaction is ADP-alpha-D-ribose 1''-phosphate + H2O = ADP-D-ribose + phosphate. Its function is as follows. Inactive precursor of the viral replicase, which is activated by cleavages carried out by the viral protease nsP2. The early replication complex formed by the polyprotein P123 and nsP4 synthesizes minus-strand RNAs. As soon P123 is cleaved into mature proteins, the plus-strand RNAs synthesis begins. In terms of biological role, the early replication complex formed by the polyprotein P123' and nsP4 synthesizes minus-strand RNAs. Polyprotein P123' is a short-lived polyprotein that accumulates during early stage of infection. As soon P123' is cleaved into mature proteins, the plus-strand RNAs synthesis begins. Functionally, cytoplasmic capping enzyme that catalyzes two virus-specific reactions: methyltransferase and nsP1 guanylyltransferase. mRNA-capping is necessary since all viral RNAs are synthesized in the cytoplasm, and host capping enzymes are restricted to the nucleus. The enzymatic reaction involves a covalent link between 7-methyl-GMP and nsP1, whereas eukaryotic capping enzymes form a covalent complex only with GMP. nsP1 capping consists in the following reactions: GTP is first methylated into 7-methyl-GMP and then is covalently linked to nsP1 to form the m7GMp-nsP1 complex from which 7-methyl-GMP complex is transferred to the mRNA to create the cap structure. NsP1 is needed for the initiation of the minus-strand RNAs synthesis. Probably serves as a membrane anchor for the replication complex composed of nsP1-nsP4. Palmitoylated nsP1 is remodeling host cell cytoskeleton, and induces filopodium-like structure formation at the surface of the host cell. Its function is as follows. Multifunctional protein whose N-terminus is part of the RNA polymerase complex and displays NTPase, RNA triphosphatase and helicase activities. NTPase and RNA triphosphatase are involved in viral RNA capping and helicase keeps a check on the dsRNA replication intermediates. The C-terminus harbors a protease that specifically cleaves the polyproteins and releases the mature proteins. Required for the shutoff of minus-strand RNAs synthesis. Specifically inhibits the host IFN response by promoting the nuclear export of host STAT1. Also inhibits host transcription by inducing rapid proteasome-dependent degradation of POLR2A, a catalytic subunit of the RNAPII complex. The resulting inhibition of cellular protein synthesis serves to ensure maximal viral gene expression and to evade host immune response. Seems to be essential for minus-strand RNAs and subgenomic 26S mRNAs synthesis. Displays mono-ADP-ribosylhydrolase activity. ADP-ribosylation is a post-translational modification that controls various processes of the host cell and the virus probably needs to revert it for optimal viral replication. Binds proteins of FXR family and sequesters them into the viral RNA replication complexes thereby inhibiting the formation of host stress granules on viral mRNAs. The nsp3-FXR complexes bind viral RNAs and probably orchestrate the assembly of viral replication complexes, thanks to the ability of FXR family members to self-assemble and bind DNA. In terms of biological role, seems to be essential for minus-strand RNAs and subgenomic 26S mRNAs synthesis. Displays mono-ADP-ribosylhydrolase activity. ADP-ribosylation is a post-translantional modification that controls various processes of the host cell and the virus probably needs to revert it for optimal viral replication. Binds proteins of G3BP family and sequesters them into the viral RNA replication complexes thereby inhibiting the formation of host stress granules on viral mRNAs. The nsp3'-G3BP complexes bind viral RNAs and probably orchestrate the assembly of viral replication complexes, thanks to the ability of G3BP family members to self-assemble and bind DNA. Functionally, RNA dependent RNA polymerase. Replicates genomic and antigenomic RNA by recognizing replications specific signals. The early replication complex formed by the polyprotein P123 and nsP4 synthesizes minus-strand RNAs. The late replication complex composed of fully processed nsP1-nsP4 is responsible for the production of genomic and subgenomic plus-strand RNAs. The core catalytic domain of nsP4 also possesses terminal adenylyltransferase (TATase) activity that is probably involved in maintenance and repair of the poly(A) tail, an element required for replication of the viral genome. The sequence is that of Polyprotein P1234 from Barmah forest virus (BFV).